Consider the following 317-residue polypeptide: Acetyl-coenzyme A carboxylase carboxyl transferase subunit alpha (317 aa).

The region spanning asparagine 32–alanine 293 is the CoA carboxyltransferase C-terminal domain.

This sequence belongs to the AccA family. In terms of assembly, acetyl-CoA carboxylase is a heterohexamer composed of biotin carboxyl carrier protein (AccB), biotin carboxylase (AccC) and two subunits each of ACCase subunit alpha (AccA) and ACCase subunit beta (AccD).

Its subcellular location is the cytoplasm. The catalysed reaction is N(6)-carboxybiotinyl-L-lysyl-[protein] + acetyl-CoA = N(6)-biotinyl-L-lysyl-[protein] + malonyl-CoA. The protein operates within lipid metabolism; malonyl-CoA biosynthesis; malonyl-CoA from acetyl-CoA: step 1/1. Component of the acetyl coenzyme A carboxylase (ACC) complex. First, biotin carboxylase catalyzes the carboxylation of biotin on its carrier protein (BCCP) and then the CO(2) group is transferred by the carboxyltransferase to acetyl-CoA to form malonyl-CoA. This is Acetyl-coenzyme A carboxylase carboxyl transferase subunit alpha from Legionella pneumophila (strain Paris).